Here is a 484-residue protein sequence, read N- to C-terminus: Transcription factor MYB88 (484 aa).

The segment at 1–20 is disordered; the sequence is MEETTKQNNMKKKKKILLHS. The Nuclear localization signal motif lies at 13–20; the sequence is KKKILLHS. HTH myb-type domains follow at residues 25–76 and 77–131; these read KKER…YTYL and NSDF…KKRA. DNA-binding regions (H-T-H motif) lie at residues 53 to 76 and 104 to 127; these read WAII…YTYL and WTEI…TTLC. 3 disordered regions span residues 215 to 241, 321 to 383, and 458 to 484; these read NATS…DKSN, RSSN…GGEL, and GVES…LDSL. Over residues 232 to 241 the composition is skewed to basic and acidic residues; sequence KESDGEDKSN. Low complexity predominate over residues 339–348; the sequence is SPASSEYSSG. Residues 354–380 show a composition bias toward polar residues; the sequence is TIMTHPSGDKTQQLMSDTQTTSHQQNG. Positions 463–476 are enriched in pro residues; it reads SPYPSANPSQPPPC.

In terms of assembly, interacts with RBR1. Expressed at low levels in all organs including roots, leaves, hypocotyls stems, flowers, siliques and buds.

The protein localises to the nucleus. Its function is as follows. Transcription factor that binds to DNA in promoters cis-regulatory element 5'-GGCGCGC-3' of cell cycle genes, including cyclins, cyclin-dependent kinases (CDKs), and components of the pre-replication complex. Binds to DNA in promoters cis-regulatory element 5'-AGCCG-3' of auxin regulated genes (e.g. PIN3 and PIN7). Together with FAMA and MYB124, ensures that stomata contain just two guard cells (GCs) by enforcing a single symmetric precursor cell division before stomatal maturity. Represses the expression of the mitosis-inducing factors CDKB1-1 and CDKA-1, specifically required for the last guard mother cells (GMC) symmetric divisions in the stomatal pathway. Represses CYCA2-3 in newly formed guard cells. Together with MYB88, regulates stomata spacing by restricting divisions late in the stomatal cell lineage thus limiting the number of GMC divisions. In collaboration with CDKB1-1 and CDKB1-2, restrict the G1/S transition and chloroplast and nuclear number during stomatal formation, and normally maintain fate and developmental progression throughout the stomatal cell lineage. Involved in sensing and/or transducing abiotic stress (e.g. drought and salt), probably via the positive regulation of NAC019. Regulates female reproduction being required for entry into megasporogenesis, probably via the regulation of cell cycle genes. Plays a minor role in lateral roots (LRs) initiation. Involved complementarily in establishing the gravitropic set-point angles of lateral roots by regulating the transcription of PIN3 and PIN7 in gravity-sensing cells of primary and lateral roots. The protein is Transcription factor MYB88 of Arabidopsis thaliana (Mouse-ear cress).